We begin with the raw amino-acid sequence, 152 residues long: Small ribosomal subunit protein uS13 (152 aa).

Phosphoserine is present on serine 41.

Belongs to the universal ribosomal protein uS13 family.

The protein localises to the cytoplasm. Located at the top of the head of the 40S subunit, it contacts several helices of the 18S rRNA. In Drosophila melanogaster (Fruit fly), this protein is Small ribosomal subunit protein uS13 (RpS18).